A 745-amino-acid polypeptide reads, in one-letter code: Copper-transporting ATPase (745 aa).

The 67-residue stretch at 1–67 (MKESFYIEGM…LIEKLGYSPK (67 aa)) folds into the HMA domain. The Cytoplasmic segment spans residues 1-83 (MKESFYIEGM…KKEFFSPNVK (83 aa)). Residues Cys12 and Cys15 each contribute to the Cu cation site. Residues 84–104 (LALAVIFTLFVVYLSMGAMLS) traverse the membrane as a helical segment. Residues 105–124 (PSLLPESLLAINNHSNFLNA) lie on the Extracellular side of the membrane. Residues 125-144 (CLQLIGALIVMHLGRDFYIQ) form a helical membrane-spanning segment. Residues 145–151 (GFKALWH) are Cytoplasmic-facing. Residues 152–172 (RQPNMSSLIAIGTSAALISSL) form a helical membrane-spanning segment. The Extracellular segment spans residues 173–194 (WQLYLVYTNHYTDQWSYGHYYF). A helical transmembrane segment spans residues 195-215 (ESVCVILMFVMVGKRIENVSK). Topologically, residues 216–343 (DKALDAMQAL…KAEISRLADK (128 aa)) are cytoplasmic. The chain crosses the membrane as a helical span at residues 344–366 (VSSVFVPSVIAIAILAFVVWLII). At 367-379 (APKPDFWWNFGIA) the chain is on the extracellular side. The helical transmembrane segment at 380-397 (LEVFVSVLVISCPCALGL) threads the bilayer. At 398 to 685 (ATPMSILVAN…KLSQATIKNI (288 aa)) the chain is on the cytoplasmic side. The active-site 4-aspartylphosphate intermediate is Asp435. Mg(2+) is bound by residues Asp631 and Asp635. Residues 686–705 (KENLFWAFCYNSVFIPLACG) traverse the membrane as a helical segment. Over 706-716 (VLYKANIMLSP) the chain is Extracellular. Residues 717–735 (AIAGLAMSLSSVSVVLNSQ) traverse the membrane as a helical segment. The Cytoplasmic segment spans residues 736 to 745 (RLRNFKIKDH).

It belongs to the cation transport ATPase (P-type) (TC 3.A.3) family. Type IB subfamily.

It is found in the cell membrane. It catalyses the reaction Cu(2+)(in) + ATP + H2O = Cu(2+)(out) + ADP + phosphate + H(+). Probably involved in copper export. The polypeptide is Copper-transporting ATPase (copA) (Helicobacter pylori (Campylobacter pylori)).